Here is a 352-residue protein sequence, read N- to C-terminus: Neutral protease 2 (352 aa).

An N-terminal signal peptide occupies residues 1–19 (MRVTTLSTALFALASTAVS). Residues 20-175 (APTAGSSSPG…TKALSQLTRR (156 aa)) constitute a propeptide that is removed on maturation. 3 disulfides stabilise this stretch: cysteine 181–cysteine 253, cysteine 260–cysteine 278, and cysteine 292–cysteine 352. Histidine 303 contacts Zn(2+). The active site involves glutamate 304. The Zn(2+) site is built by histidine 307 and aspartate 318.

It belongs to the peptidase M35 family. It depends on Zn(2+) as a cofactor.

It carries out the reaction Preferential cleavage of bonds with hydrophobic residues in P1'. Also 3-Asn-|-Gln-4 and 8-Gly-|-Ser-9 bonds in insulin B chain.. Metalloprotease that shows high activities on basic nuclear substrates such as histone and protamine. The sequence is that of Neutral protease 2 from Aspergillus oryzae (strain ATCC 42149 / RIB 40) (Yellow koji mold).